The primary structure comprises 598 residues: MALRCPIVSVLGHVDHGKTSLLDKIRSTRVTQREAGGITQHIGASEIPINTIKKVSKDLLGLFNANLSIPGLLVIDTPGHEAFTSLRKRGGALADIAILVVDINEGFKPQTIEAINILKQCKTPFVVAANKLDRIPGWSSSNGPFILNFNEKVQHPNAMTEFEIRLYENVIKHLNELGFDADLFSRVKDTTRTINVVPVSAITGEGVPDLLIIIAGLAQKFLEQKLALNVEGYAKGTVLEVKEEKGLGRTIDAIIYDGIARTGDYIVIGNPDGIVTSKVKALLKPKELDEMRDPKDKFKPSREISAATGVKISAPELEMVVSGSPLRIVPKEHINKAMDEITEEIEEFTIKTDEEGIIIKADTMGSLEAIANELRKAKANIKKAEVGDVSKKDIIEASSYSSSDPLNGLIISFNTKTLPDAKLELEKTDVKLLEGKIIYKLVEDYGAWLKEMEELLKSDELNKLTKPAMIKILPNCIFRQKGPAVCGVEILYGTLKIGSHIMSDDGKKLGYVKEIRNNQQENIKEAKVGMQVPVSIDGNMILGRNAKENDILYVEVSEPEVRKLYHIYKDELRGDEKEALLRYMELKQKLEKSIFWGM.

The tr-type G domain maps to 3–225; the sequence is LRCPIVSVLG…GLAQKFLEQK (223 aa). The tract at residues 12-19 is G1; the sequence is GHVDHGKT. 12-19 serves as a coordination point for GTP; it reads GHVDHGKT. A G2 region spans residues 37 to 41; that stretch reads GITQH. Positions 76-79 are G3; the sequence is DTPG. GTP contacts are provided by residues 76 to 80 and 130 to 133; these read DTPGH and NKLD. Residues 130 to 133 are G4; that stretch reads NKLD. The segment at 200–202 is G5; sequence SAI.

The protein belongs to the TRAFAC class translation factor GTPase superfamily. Classic translation factor GTPase family. IF-2 subfamily.

Functionally, function in general translation initiation by promoting the binding of the formylmethionine-tRNA to ribosomes. Seems to function along with eIF-2. This is Probable translation initiation factor IF-2 from Methanococcus vannielii (strain ATCC 35089 / DSM 1224 / JCM 13029 / OCM 148 / SB).